A 102-amino-acid polypeptide reads, in one-letter code: NADH-quinone oxidoreductase subunit K (102 aa).

3 consecutive transmembrane segments (helical) span residues 4-24 (IGLNHYLVLSTILFAIGLVGV), 31-51 (LMLFFATEILLNSVNISFAAI), and 65-85 (FFVIAIAASEVAVGLGLLIVW).

Belongs to the complex I subunit 4L family. As to quaternary structure, NDH-1 is composed of 14 different subunits. Subunits NuoA, H, J, K, L, M, N constitute the membrane sector of the complex.

The protein localises to the cell inner membrane. The enzyme catalyses a quinone + NADH + 5 H(+)(in) = a quinol + NAD(+) + 4 H(+)(out). NDH-1 shuttles electrons from NADH, via FMN and iron-sulfur (Fe-S) centers, to quinones in the respiratory chain. The immediate electron acceptor for the enzyme in this species is believed to be ubiquinone. Couples the redox reaction to proton translocation (for every two electrons transferred, four hydrogen ions are translocated across the cytoplasmic membrane), and thus conserves the redox energy in a proton gradient. The sequence is that of NADH-quinone oxidoreductase subunit K from Sulfurimonas denitrificans (strain ATCC 33889 / DSM 1251) (Thiomicrospira denitrificans (strain ATCC 33889 / DSM 1251)).